The primary structure comprises 156 residues: Ribosome-binding factor A (156 aa).

The tract at residues 124 to 156 (TRAEYAGEAQPYRLEEEPEGSGDEVPPPGGDQR) is disordered.

The protein belongs to the RbfA family. As to quaternary structure, monomer. Binds 30S ribosomal subunits, but not 50S ribosomal subunits or 70S ribosomes.

Its subcellular location is the cytoplasm. Its function is as follows. One of several proteins that assist in the late maturation steps of the functional core of the 30S ribosomal subunit. Associates with free 30S ribosomal subunits (but not with 30S subunits that are part of 70S ribosomes or polysomes). Required for efficient processing of 16S rRNA. May interact with the 5'-terminal helix region of 16S rRNA. The protein is Ribosome-binding factor A of Salinispora tropica (strain ATCC BAA-916 / DSM 44818 / JCM 13857 / NBRC 105044 / CNB-440).